Here is a 504-residue protein sequence, read N- to C-terminus: Glycerol kinase (504 aa).

Threonine 16 contributes to the ADP binding site. ATP contacts are provided by threonine 16 and threonine 17. Residue threonine 16 participates in sn-glycerol 3-phosphate binding. Residue arginine 20 participates in ADP binding. Positions 86, 87, 138, and 247 each coordinate sn-glycerol 3-phosphate. 5 residues coordinate glycerol: arginine 86, glutamate 87, tyrosine 138, aspartate 247, and glutamine 248. Positions 269 and 316 each coordinate ADP. Threonine 269, glycine 316, glutamine 320, and glycine 417 together coordinate ATP. ADP contacts are provided by glycine 417 and asparagine 421.

The protein belongs to the FGGY kinase family.

It catalyses the reaction glycerol + ATP = sn-glycerol 3-phosphate + ADP + H(+). It functions in the pathway polyol metabolism; glycerol degradation via glycerol kinase pathway; sn-glycerol 3-phosphate from glycerol: step 1/1. With respect to regulation, inhibited by fructose 1,6-bisphosphate (FBP). Key enzyme in the regulation of glycerol uptake and metabolism. Catalyzes the phosphorylation of glycerol to yield sn-glycerol 3-phosphate. In Trichodesmium erythraeum (strain IMS101), this protein is Glycerol kinase.